The primary structure comprises 570 residues: RNA polymerase I termination factor (570 aa).

The span at 1 to 16 (MDSVSNLKSTNFQNNN) shows a compositional bias: polar residues. 3 disordered regions span residues 1-21 (MDSVSNLKSTNFQNNNDPKES), 37-68 (HIKKTKKKLKKQKKRKHGSKMSHEDEDTDMDW), and 100-138 (SSMREKDKRSCHKKSSNSRSERKKHRKRKSSKERKAKIK). Basic residues predominate over residues 37–56 (HIKKTKKKLKKQKKRKHGSK). At Thr64 the chain carries Phosphothreonine. Residues 108–137 (RSCHKKSSNSRSERKKHRKRKSSKERKAKI) show a composition bias toward basic residues. In terms of domain architecture, Myb-like 1 spans 273 to 339 (KFTPSEENAL…SIYKHIRRKY (67 aa)). The 52-residue stretch at 340-391 (HIFEQRGKWTPEEDQELARLCLEKEGHWTEVGKLLGRMPEDCRDRWRNYMKC) folds into the HTH myb-type domain. A DNA-binding region (H-T-H motif) is located at residues 367 to 389 (WTEVGKLLGRMPEDCRDRWRNYM). Myb-like domains are found at residues 392–486 (GSKR…NKLV) and 493–549 (SMLS…MREK).

As to quaternary structure, interacts with FOB1. Interacts with the RENT complex subunits NET1 and SIR2.

It localises to the nucleus. The protein resides in the nucleolus. DNA-binding protein that recognizes sequence-specific replication termini (Ter sites) within rDNA. Binds to rDNA terminator elements and mediates efficient RNA polymerase I transcription termination. Required for rDNA silencing at the non-transcribed spacer 1 (NTS1). Promotes the association of SIR2 with NTS1 and contributes to maintenance of rDNA stability. This chain is RNA polymerase I termination factor, found in Saccharomyces cerevisiae (strain ATCC 204508 / S288c) (Baker's yeast).